The following is a 319-amino-acid chain: MRIVVLAGGIGGARFLRGLRQAAPDADITVIGNTGDDIHLFGLKVCPDLDTVMYTLGGGINEEQGWGRADETFHLKEELAAYGVGPEWFGLGDRDFATHIVRTQMITAGFPLSAVTEALCDRWKPGVRLIPMTDDRVETHVAVELDGERKAVHFQEYWVRLRASVPAEAVVPVGAEQAKPAPGVLEAIGEADVILFPPSNPVVSIGTILAVPGIREAIADAGVPVVGLSPIVGDAPVRGMADKVLAAVGVESTAAAVAEHYGSGLLDGWLVDTVDADAVTRVRAAGVLCRAVPLMMTDLDATAQMAREALTLAEEVREA.

A 7,8-didemethyl-8-hydroxy-5-deazariboflavin-binding site is contributed by Asp-50.

Belongs to the CofD family. Homodimer. The cofactor is Mg(2+).

The catalysed reaction is enolpyruvoyl-2-diphospho-5'-guanosine + 7,8-didemethyl-8-hydroxy-5-deazariboflavin = dehydro coenzyme F420-0 + GMP + H(+). Its pathway is cofactor biosynthesis; coenzyme F420 biosynthesis. Catalyzes the transfer of the phosphoenolpyruvate moiety from enoylpyruvoyl-2-diphospho-5'-guanosine (EPPG) to 7,8-didemethyl-8-hydroxy-5-deazariboflavin (FO) with the formation of dehydro coenzyme F420-0 and GMP. This is Phosphoenolpyruvate transferase from Streptomyces coelicolor (strain ATCC BAA-471 / A3(2) / M145).